Consider the following 406-residue polypeptide: Bifunctional enzyme IspD/IspF (406 aa).

The tract at residues Met-1–Thr-247 is 2-C-methyl-D-erythritol 4-phosphate cytidylyltransferase. The interval Phe-248 to Leu-406 is 2-C-methyl-D-erythritol 2,4-cyclodiphosphate synthase. Asp-254 and His-256 together coordinate a divalent metal cation. 4-CDP-2-C-methyl-D-erythritol 2-phosphate contacts are provided by residues Asp-254–His-256 and His-280–Ser-281. His-288 provides a ligand contact to a divalent metal cation. Residues Asp-302 to Gly-304, Phe-307 to Asp-311, Thr-378 to Glu-381, Phe-385, and Lys-388 contribute to the 4-CDP-2-C-methyl-D-erythritol 2-phosphate site.

In the N-terminal section; belongs to the IspD/TarI cytidylyltransferase family. IspD subfamily. This sequence in the C-terminal section; belongs to the IspF family. A divalent metal cation is required as a cofactor.

It carries out the reaction 2-C-methyl-D-erythritol 4-phosphate + CTP + H(+) = 4-CDP-2-C-methyl-D-erythritol + diphosphate. The catalysed reaction is 4-CDP-2-C-methyl-D-erythritol 2-phosphate = 2-C-methyl-D-erythritol 2,4-cyclic diphosphate + CMP. Its pathway is isoprenoid biosynthesis; isopentenyl diphosphate biosynthesis via DXP pathway; isopentenyl diphosphate from 1-deoxy-D-xylulose 5-phosphate: step 2/6. It functions in the pathway isoprenoid biosynthesis; isopentenyl diphosphate biosynthesis via DXP pathway; isopentenyl diphosphate from 1-deoxy-D-xylulose 5-phosphate: step 4/6. In terms of biological role, bifunctional enzyme that catalyzes the formation of 4-diphosphocytidyl-2-C-methyl-D-erythritol from CTP and 2-C-methyl-D-erythritol 4-phosphate (MEP) (IspD), and catalyzes the conversion of 4-diphosphocytidyl-2-C-methyl-D-erythritol 2-phosphate (CDP-ME2P) to 2-C-methyl-D-erythritol 2,4-cyclodiphosphate (ME-CPP) with a corresponding release of cytidine 5-monophosphate (CMP) (IspF). This is Bifunctional enzyme IspD/IspF from Helicobacter pylori (strain HPAG1).